A 460-amino-acid polypeptide reads, in one-letter code: Dynactin subunit 4 (460 aa).

Position 2 is an N-acetylalanine (A2). Residues Q152 to N172 adopt a coiled-coil conformation. A Phosphoserine modification is found at S196. K215 participates in a covalent cross-link: Glycyl lysine isopeptide (Lys-Gly) (interchain with G-Cter in SUMO2). T407 is subject to Phosphothreonine.

This sequence belongs to the dynactin subunit 4 family. As to quaternary structure, subunit of dynactin, a multiprotein complex part of a tripartite complex with dynein and a adapter, such as BICDL1, BICD2 or HOOK3. The dynactin complex is built around ACTR1A/ACTB filament and consists of an actin-related filament composed of a shoulder domain, a pointed end and a barbed end. Its length is defined by its flexible shoulder domain. The soulder is composed of 2 DCTN1 subunits, 4 DCTN2 and 2 DCTN3. The 4 DCNT2 (via N-terminus) bind the ACTR1A filament and act as molecular rulers to determine the length. The pointed end is important for binding dynein-dynactin cargo adapters. Consists of 4 subunits: ACTR10, DCNT4, DCTN5 and DCTN6. The barbed end is composed of a CAPZA1:CAPZB heterodimers, which binds ACTR1A/ACTB filament and dynactin and stabilizes dynactin. Interacts with ATP7B, but not ATP7A, in a copper-dependent manner. Interacts with ANK2; this interaction is required for localization at costameres. Interacts with N4BP2L1.

It localises to the cytoplasm. It is found in the cytoskeleton. Its subcellular location is the microtubule organizing center. The protein localises to the centrosome. The protein resides in the stress fiber. It localises to the cell cortex. It is found in the myofibril. Its subcellular location is the sarcomere. Functionally, part of the dynactin complex that activates the molecular motor dynein for ultra-processive transport along microtubules. The chain is Dynactin subunit 4 from Homo sapiens (Human).